The primary structure comprises 281 residues: MKRIVVVSGLSGAGKTTAMGFLEDLGYFCVDNVPGNILEELLKLFMSSDLEKMAMAIDVRSEHLGDPISTVERIKEKTNALVIFLEASTEELLRRYALTRRRHPLQKDGLGLEDAIEKEKEILSHIKEIADVVIDTTRMNTHQLRETLAHFLVNQAGGTSVRIMSFGFKHGIPMDADFVFDARFLPNPHYVPELSSKTGLDSEVEAYFKNYPVVEEFIEKIFEVLKVAIEEYQRTGRRIITVGIGCTGGKHRSVYITHRLKEMLEREGFTVIEKHRDIEKV.

9-16 contributes to the ATP binding site; the sequence is GLSGAGKT. 58–61 is a GTP binding site; it reads DVRS.

It belongs to the RapZ-like family.

Displays ATPase and GTPase activities. The protein is Nucleotide-binding protein Tpet_1006 of Thermotoga petrophila (strain ATCC BAA-488 / DSM 13995 / JCM 10881 / RKU-1).